Reading from the N-terminus, the 428-residue chain is Serine--tRNA ligase (428 aa).

Residue 231-233 (TAE) participates in L-serine binding. 262–264 (RAE) contributes to the ATP binding site. Glu285 contacts L-serine. 349-352 (EISS) lines the ATP pocket. Residue Ser385 participates in L-serine binding.

This sequence belongs to the class-II aminoacyl-tRNA synthetase family. Type-1 seryl-tRNA synthetase subfamily. As to quaternary structure, homodimer. The tRNA molecule binds across the dimer.

It is found in the cytoplasm. It catalyses the reaction tRNA(Ser) + L-serine + ATP = L-seryl-tRNA(Ser) + AMP + diphosphate + H(+). It carries out the reaction tRNA(Sec) + L-serine + ATP = L-seryl-tRNA(Sec) + AMP + diphosphate + H(+). It participates in aminoacyl-tRNA biosynthesis; selenocysteinyl-tRNA(Sec) biosynthesis; L-seryl-tRNA(Sec) from L-serine and tRNA(Sec): step 1/1. Its function is as follows. Catalyzes the attachment of serine to tRNA(Ser). Is also able to aminoacylate tRNA(Sec) with serine, to form the misacylated tRNA L-seryl-tRNA(Sec), which will be further converted into selenocysteinyl-tRNA(Sec). The protein is Serine--tRNA ligase of Methylorubrum populi (strain ATCC BAA-705 / NCIMB 13946 / BJ001) (Methylobacterium populi).